Consider the following 338-residue polypeptide: Glyceraldehyde-3-phosphate dehydrogenase 2 (338 aa).

NAD(+) contacts are provided by residues Arg-12–Ile-13, Asp-34, and Arg-79. D-glyceraldehyde 3-phosphate-binding positions include Ser-150 to Thr-152, Thr-181, Thr-210 to Gly-211, and Arg-233. Cys-151 (nucleophile) is an active-site residue. An NAD(+)-binding site is contributed by Asn-315.

The protein belongs to the glyceraldehyde-3-phosphate dehydrogenase family. In terms of assembly, homotetramer.

The protein resides in the cytoplasm. The catalysed reaction is D-glyceraldehyde 3-phosphate + phosphate + NAD(+) = (2R)-3-phospho-glyceroyl phosphate + NADH + H(+). It functions in the pathway carbohydrate degradation; glycolysis; pyruvate from D-glyceraldehyde 3-phosphate: step 1/5. The sequence is that of Glyceraldehyde-3-phosphate dehydrogenase 2 (GPD2) from Mucor circinelloides f. lusitanicus (Mucor racemosus var. lusitanicus).